Reading from the N-terminus, the 213-residue chain is Putative 3-methyladenine DNA glycosylase (213 aa).

Belongs to the DNA glycosylase MPG family.

This chain is Putative 3-methyladenine DNA glycosylase, found in Corynebacterium jeikeium (strain K411).